The chain runs to 622 residues: Serine/threonine-protein kinase PknB (622 aa).

The Cytoplasmic portion of the chain corresponds to 1–328 (MTTPPHLSDR…TESDGSIGRW (328 aa)). A Protein kinase domain is found at 11–273 (YELGDILGFG…TAAEMRADLI (263 aa)). Residues 17 to 25 (LGFGGMSEV), Lys40, and 93 to 95 (EYV) contribute to the ATP site. Residue Asp138 is the Proton acceptor of the active site. ATP contacts are provided by residues 140-143 (KPAN) and Asp156. Mg(2+)-binding residues include Asn143 and Asp156. A phosphoserine; by autocatalysis mark is found at Ser166 and Ser168. Thr170, Thr172, and Thr308 each carry phosphothreonine; by autocatalysis. A helical membrane pass occupies residues 329–349 (VAVVAVLAVLTIAIVAAFNTF). Over 350 to 622 (GGNTRDVQVP…DGIITLKFGQ (273 aa)) the chain is Extracellular. 4 consecutive PASTA domains span residues 352-418 (NTRD…NVST), 419-486 (GPEQ…IVGS), 487-553 (GPET…QVSK), and 554-622 (GNQF…KFGQ). Positions 381-404 (RTLQKPDSTIPPDHVISTEPGANA) are disordered.

This sequence belongs to the protein kinase superfamily. Ser/Thr protein kinase family. As to quaternary structure, homodimer. Autophosphorylated. Dephosphorylated by PstP.

The protein localises to the cell membrane. It catalyses the reaction L-seryl-[protein] + ATP = O-phospho-L-seryl-[protein] + ADP + H(+). It carries out the reaction L-threonyl-[protein] + ATP = O-phospho-L-threonyl-[protein] + ADP + H(+). Its function is as follows. Protein kinase that regulates many aspects of mycobacterial physiology. Is a key component of a signal transduction pathway that regulates cell growth, cell shape and cell division via phosphorylation of target proteins. The protein is Serine/threonine-protein kinase PknB (pknB) of Mycobacterium leprae (strain TN).